A 179-amino-acid polypeptide reads, in one-letter code: Replication restart protein DnaT (179 aa).

The segment at 156 to 179 (GGLPKRDVNTVSEPDSQIPPGFRG) is disordered.

Belongs to the DnaT family. Homooligomerizes. Interacts with PriB. Component of the replication restart primosome. Primosome assembly occurs via a 'hand-off' mechanism. PriA binds to replication forks, subsequently PriB then DnaT bind; DnaT then displaces ssDNA to generate the helicase loading substrate.

Involved in the restart of stalled replication forks, which reloads the replicative helicase on sites other than the origin of replication. Can function in multiple replication restart pathways. Displaces ssDNA from a PriB-ssDNA complex. Probably forms a spiral filament on ssDNA. In Escherichia coli O1:K1 / APEC, this protein is Replication restart protein DnaT.